The primary structure comprises 173 residues: Alpha-crystallin A chain (173 aa).

At M1 the chain carries N-acetylmethionine. Residues 1–63 (MDITIQHPWF…RTVLESGISE (63 aa)) are required for complex formation with BFSP1 and BFSP2. Q6 is subject to Deamidated glutamine; partial. S45 is modified (phosphoserine). Residue Q50 is modified to Deamidated glutamine; partial. The sHSP domain maps to 52-164 (LFRTVLESGI…SDRSIPVSRE (113 aa)). Position 99 is an N6-acetyllysine (K99). Residues H100, E102, and H107 each contribute to the Zn(2+) site. At S122 the chain carries Phosphoserine. N123 is subject to Deamidated asparagine; partial. The tract at residues 144–173 (PKIHSNMESSHSDRSIPVSREEKPTLAPSS) is disordered. The span at 153–167 (SHSDRSIPVSREEKP) shows a compositional bias: basic and acidic residues. H154 is a Zn(2+) binding site. An O-linked (GlcNAc) serine glycan is attached at S162.

The protein belongs to the small heat shock protein (HSP20) family. In terms of assembly, heteromer composed of three CRYAA and one CRYAB subunits. Inter-subunit bridging via zinc ions enhances stability, which is crucial as there is no protein turn over in the lens. Can also form homodimers and homotetramers (dimers of dimers) which serve as the building blocks of homooligomers. Within homooligomers, the zinc-binding motif is created from residues of 3 different molecules. His-100 and Glu-102 from one molecule are ligands of the zinc ion, and His-107 and His-154 residues from additional molecules complete the site with tetrahedral coordination geometry. Part of a complex required for lens intermediate filament formation composed of BFSP1, BFSP2 and CRYAA. Acetylation at Lys-99 may increase chaperone activity. Post-translationally, undergoes age-dependent proteolytical cleavage at the C-terminus.

The protein resides in the cytoplasm. The protein localises to the nucleus. Its function is as follows. Contributes to the transparency and refractive index of the lens. Acts as a chaperone, preventing aggregation of various proteins under a wide range of stress conditions. Required for the correct formation of lens intermediate filaments as part of a complex composed of BFSP1, BFSP2 and CRYAA. This Didelphis virginiana (North American opossum) protein is Alpha-crystallin A chain (CRYAA).